A 252-amino-acid polypeptide reads, in one-letter code: ATP synthase subunit a, chloroplastic (252 aa).

Helical transmembrane passes span 41–61, 100–120, 138–158, 204–224, and 225–245; these read GQVL…TLLA, VPFL…GALL, DINT…YAGI, LIVG…LMLL, and GVFT…AYIG.

The protein belongs to the ATPase A chain family. In terms of assembly, F-type ATPases have 2 components, CF(1) - the catalytic core - and CF(0) - the membrane proton channel. CF(1) has five subunits: alpha(3), beta(3), gamma(1), delta(1), epsilon(1). CF(0) has four main subunits: a, b, b' and c.

The protein localises to the plastid. It localises to the chloroplast thylakoid membrane. Its function is as follows. Key component of the proton channel; it plays a direct role in the translocation of protons across the membrane. This chain is ATP synthase subunit a, chloroplastic, found in Oedogonium cardiacum (Filamentous green alga).